We begin with the raw amino-acid sequence, 907 residues long: Collagen alpha-2(I) chain (907 aa).

Disordered stretches follow at residues 1-183 and 199-907; these read GPMG…GIPG and IPGP…PGPS. Over residues 19 to 33 the composition is skewed to basic and acidic residues; that stretch reads AGEDGHPGKPGRERG. 3 stretches are compositionally biased toward low complexity: residues 101–130, 155–169, and 206–221; these read VGAP…SAGP, AGPR…VSGP, and PGPV…RGIV. Asparagine 260 carries the post-translational modification Deamidated asparagine. Proline 272 carries the 4-hydroxyproline modification. Composition is skewed to low complexity over residues 272 to 281, 292 to 307, 340 to 362, 424 to 441, 453 to 475, 495 to 507, 535 to 555, and 566 to 581; these read PGIRGSRGIP, PPGS…VRGP, PAGI…RGEP, PGES…SRGP, EPGV…PGER, APGA…PAGA, VGPA…QPGA, and NGPV…AGPA. Gly residues predominate over residues 591–600; sequence GSRGDGGPPG. 5 stretches are compositionally biased toward low complexity: residues 601 to 611, 664 to 691, 706 to 745, 756 to 766, and 783 to 804; these read ATGFPGAAGRT, EAGT…IPGS, EPGP…NPGN, NSGPVGAAGAP, and EPGP…PSGP. A compositionally biased stretch (basic and acidic residues) spans 808–819; it reads RGDKGEPGDKGP. Pro residues predominate over residues 892–907; it reads AGPPGPPGPPGPPGPS.

It belongs to the fibrillar collagen family. Trimers of one alpha 2(I) and two alpha 1(I) chains. Interacts (via C-terminus) with TMEM131 (via PapD-L domain); the interaction is direct and is involved in assembly and TRAPPIII ER-to-Golgi transport complex-dependent secretion of collagen. Prolines at the third position of the tripeptide repeating unit (G-X-Y) are hydroxylated in some or all of the chains. As to expression, forms the fibrils of tendon, ligaments and bones. In bones, the fibrils are mineralized with calcium hydroxyapatite.

The protein localises to the secreted. The protein resides in the extracellular space. It is found in the extracellular matrix. In terms of biological role, type I collagen is a member of group I collagen (fibrillar forming collagen). The sequence is that of Collagen alpha-2(I) chain from Macrauchenia sp.